The chain runs to 373 residues: tRNA-specific 2-thiouridylase MnmA (373 aa).

ATP contacts are provided by residues 12–19 (GMSGGVDS) and M38. The interaction with target base in tRNA stretch occupies residues 98–100 (NPD). C103 serves as the catalytic Nucleophile. C103 and C200 are disulfide-bonded. G127 contacts ATP. Residues 150-152 (KDQ) are interaction with tRNA. C200 functions as the Cysteine persulfide intermediate in the catalytic mechanism. The interval 312-313 (RY) is interaction with tRNA.

This sequence belongs to the MnmA/TRMU family.

Its subcellular location is the cytoplasm. It carries out the reaction S-sulfanyl-L-cysteinyl-[protein] + uridine(34) in tRNA + AH2 + ATP = 2-thiouridine(34) in tRNA + L-cysteinyl-[protein] + A + AMP + diphosphate + H(+). Catalyzes the 2-thiolation of uridine at the wobble position (U34) of tRNA, leading to the formation of s(2)U34. The polypeptide is tRNA-specific 2-thiouridylase MnmA (Streptococcus agalactiae serotype Ia (strain ATCC 27591 / A909 / CDC SS700)).